Here is a 330-residue protein sequence, read N- to C-terminus: tRNA U34 carboxymethyltransferase (330 aa).

Carboxy-S-adenosyl-L-methionine is bound by residues K91, W105, K110, G130, 152–154, 181–182, M196, Y200, and R315; these read DPS and IE.

It belongs to the class I-like SAM-binding methyltransferase superfamily. CmoB family. In terms of assembly, homotetramer.

The enzyme catalyses carboxy-S-adenosyl-L-methionine + 5-hydroxyuridine(34) in tRNA = 5-carboxymethoxyuridine(34) in tRNA + S-adenosyl-L-homocysteine + H(+). Catalyzes carboxymethyl transfer from carboxy-S-adenosyl-L-methionine (Cx-SAM) to 5-hydroxyuridine (ho5U) to form 5-carboxymethoxyuridine (cmo5U) at position 34 in tRNAs. The protein is tRNA U34 carboxymethyltransferase of Shewanella piezotolerans (strain WP3 / JCM 13877).